The primary structure comprises 447 residues: KICSTOR complex protein ITFG2 (447 aa).

The stretch at 19–48 (FPHAICLGDVDNDTLNELVVGDTSGKVSVY) is one FG-GAP 1; atypical repeat. Residue Ser-104 is modified to Phosphoserine. The stretch at 126-155 (NTKVMLISDIDGDGCRELVVGYTDRVVRAF) is one FG-GAP 2; atypical repeat. Residue Ser-220 is modified to Phosphoserine.

Part of the KICSTOR complex composed of KPTN, ITFG2, KICS2 and SZT2. SZT2 probably serves as a link between the other three proteins in the KICSTOR complex and may mediate the direct interaction with the GATOR complex via GATOR1. The KICSTOR complex interacts directly with the GATOR1 complex and most probably indirectly with the GATOR2 complex in an amino acid-independent manner.

The protein localises to the lysosome membrane. In terms of biological role, as part of the KICSTOR complex functions in the amino acid-sensing branch of the TORC1 signaling pathway. Recruits, in an amino acid-independent manner, the GATOR1 complex to the lysosomal membranes and allows its interaction with GATOR2 and the RAG GTPases. Functions upstream of the RAG GTPases and is required to negatively regulate mTORC1 signaling in absence of amino acids. In absence of the KICSTOR complex mTORC1 is constitutively localized to the lysosome and activated. The KICSTOR complex is also probably involved in the regulation of mTORC1 by glucose. The protein is KICSTOR complex protein ITFG2 of Homo sapiens (Human).